The following is a 390-amino-acid chain: Heme chaperone HemW (390 aa).

Residues 15–254 form the Radical SAM core domain; it reads PMPGQPFGVY…DARLSAAGFA (240 aa). Residue tyrosine 24 coordinates S-adenosyl-L-methionine. The [4Fe-4S] cluster site is built by cysteine 30, cysteine 34, and cysteine 37. Residues glycine 82, 83–84, glutamate 115, glutamine 142, arginine 154, and aspartate 179 each bind S-adenosyl-L-methionine; that span reads GT.

It belongs to the anaerobic coproporphyrinogen-III oxidase family. HemW subfamily. [4Fe-4S] cluster is required as a cofactor.

The protein localises to the cytoplasm. Its function is as follows. Probably acts as a heme chaperone, transferring heme to an unknown acceptor. Binds one molecule of heme per monomer, possibly covalently. Binds 1 [4Fe-4S] cluster. The cluster is coordinated with 3 cysteines and an exchangeable S-adenosyl-L-methionine. The sequence is that of Heme chaperone HemW from Mycobacterium tuberculosis (strain CDC 1551 / Oshkosh).